The sequence spans 289 residues: Ribosomal RNA small subunit methyltransferase A (289 aa).

S-adenosyl-L-methionine contacts are provided by Asn-21, Leu-23, Gly-48, Glu-69, Asp-94, and Asn-120.

It belongs to the class I-like SAM-binding methyltransferase superfamily. rRNA adenine N(6)-methyltransferase family. RsmA subfamily.

The protein localises to the cytoplasm. The catalysed reaction is adenosine(1518)/adenosine(1519) in 16S rRNA + 4 S-adenosyl-L-methionine = N(6)-dimethyladenosine(1518)/N(6)-dimethyladenosine(1519) in 16S rRNA + 4 S-adenosyl-L-homocysteine + 4 H(+). Functionally, specifically dimethylates two adjacent adenosines (A1518 and A1519) in the loop of a conserved hairpin near the 3'-end of 16S rRNA in the 30S particle. May play a critical role in biogenesis of 30S subunits. In Actinobacillus pleuropneumoniae serotype 5b (strain L20), this protein is Ribosomal RNA small subunit methyltransferase A.